The following is a 590-amino-acid chain: Neuronal PAS domain-containing protein 1 (590 aa).

In terms of domain architecture, bHLH spans glutamine 45–arginine 98. The 73-residue stretch at glutamate 135 to proline 207 folds into the PAS 1 domain. The segment at leucine 198–isoleucine 229 is disordered. Residues serine 212–serine 222 show a composition bias toward low complexity. The region spanning alanine 293–aspartate 359 is the PAS 2 domain. Positions threonine 365–alanine 408 constitute a PAC domain. Positions alanine 425–phenylalanine 494 are disordered. Over residues glycine 433–proline 442 the composition is skewed to pro residues. Residues isoleucine 463–glutamate 476 show a composition bias toward basic and acidic residues.

Efficient DNA binding requires dimerization with another bHLH protein. Interacts with ARNT; forms a heterodimer that binds core DNA sequence 5'-[AG]CGTG-3' within the hypoxia response element (HRE) leading to a transcriptional repressor on its target gene TH.

Its subcellular location is the nucleus. Functionally, may control regulatory pathways relevant to schizophrenia and to psychotic illness. May play a role in late central nervous system development by modulating EPO expression in response to cellular oxygen level. Forms a heterodimer that binds core DNA sequence 5'-TACGTG-3' within the hypoxia response element (HRE) leading to transcriptional repression on its target gene TH. The polypeptide is Neuronal PAS domain-containing protein 1 (NPAS1) (Homo sapiens (Human)).